We begin with the raw amino-acid sequence, 1041 residues long: Importin-9 (1041 aa).

Residue Ala-2 is modified to N-acetylalanine. The Importin N-terminal domain occupies 43-119 (AEEQIKVLEV…RELLPNGLRE (77 aa)). Residues 936 to 967 (QATPAEWSQDDSNDMWEDQEEEEEEEEDGLAG) are disordered. The span at 943–964 (SQDDSNDMWEDQEEEEEEEEDG) shows a compositional bias: acidic residues.

Belongs to the importin beta family. As to quaternary structure, interacts with histones H2A, H2B, H3 and H4. The binding is coupled to RanGTP cycles. Interacts with AKIRIN2; promoting association with pre-assembled proteasomes. Associates with pre-assembled proteasomes; interaction is indirect and mediated via interaction with AKIRIN2. Interacts with PPP2R1A and PPP2R1B.

It is found in the cytoplasm. Its subcellular location is the nucleus. Functionally, nuclear transport receptor that mediates nuclear import of proteins, such as histones, proteasome and actin. Serves as receptor for nuclear localization signals (NLS) in cargo substrates. Is thought to mediate docking of the importin/substrate complex to the nuclear pore complex (NPC) through binding to nucleoporin and the complex is subsequently translocated through the pore by an energy requiring, Ran-dependent mechanism. At the nucleoplasmic side of the NPC, Ran binds to the importin, the importin/substrate complex dissociates and importin is re-exported from the nucleus to the cytoplasm where GTP hydrolysis releases Ran. The directionality of nuclear import is thought to be conferred by an asymmetric distribution of the GTP- and GDP-bound forms of Ran between the cytoplasm and nucleus. Mediates the import of pre-assembled proteasomes into the nucleus; AKIRIN2 acts as a molecular bridge between IPO9 and the proteasome complex. Mediates the nuclear import of histones H2A, H2B, H4 and H4. In addition to nuclear import, also acts as a chaperone for histones by preventing inappropriate non-nucleosomal interactions. Mediates the nuclear import of actin. The protein is Importin-9 of Homo sapiens (Human).